We begin with the raw amino-acid sequence, 227 residues long: Nitrobenzene nitroreductase (227 aa).

14-18 provides a ligand contact to FMN; that stretch reads RRAKR. The NADP(+) site is built by serine 44 and isoleucine 109. Residues 172 to 173 and lysine 215 each bind FMN; that span reads VF.

It belongs to the nitroreductase family. In terms of assembly, monomer. FMN is required as a cofactor.

The catalysed reaction is N-phenylhydroxylamine + 2 NADP(+) + H2O = nitrobenzene + 2 NADPH + 2 H(+). It participates in xenobiotic degradation; nitrobenzene degradation. With respect to regulation, inhibited by dicumarol, p-hydroxymercuribenzoate and salicyl hydroxamate. In terms of biological role, involved in the biodegradation of nitroaromatic compounds. Catalyzes the two-electron reduction of nitrobenzene (NB) to produce a nitrosobenzene (NOB) intermediate, which is immediately reduced to hydroxylaminobenzene (HAB) by a second two-electron transfer. Also active on menadione and nitrofurazone. Replacing NADPH with NADH results in a 4-fold decrease in the reaction rate. In Ectopseudomonas oleovorans (Pseudomonas oleovorans), this protein is Nitrobenzene nitroreductase.